The sequence spans 132 residues: Intraflagellar transport protein 20 homolog B (132 aa).

Residues 87-112 (EAQQQQLYALIAEKKMQLERYRIEYD) adopt a coiled-coil conformation.

Its subcellular location is the golgi apparatus. The protein resides in the cis-Golgi network. The protein localises to the cytoplasm. It is found in the cytoskeleton. It localises to the microtubule organizing center. Its subcellular location is the centrosome. The protein resides in the centriole. The protein localises to the cell projection. It is found in the cilium. Its function is as follows. Involved in ciliary process assembly. May play a role in the trafficking of ciliary membrane proteins from the Golgi complex to the cilium. Regulates the platelet-derived growth factor receptor-alpha (PDGFRA) signaling pathway. Plays an important role in spermatogenesis, particularly spermiogenesis, when germ cells form flagella. The sequence is that of Intraflagellar transport protein 20 homolog B (ift20-b) from Xenopus laevis (African clawed frog).